Consider the following 240-residue polypeptide: Sugar fermentation stimulation protein homolog (240 aa).

The protein belongs to the SfsA family.

This chain is Sugar fermentation stimulation protein homolog, found in Methanothermobacter thermautotrophicus (strain ATCC 29096 / DSM 1053 / JCM 10044 / NBRC 100330 / Delta H) (Methanobacterium thermoautotrophicum).